Reading from the N-terminus, the 82-residue chain is Small ribosomal subunit protein uS17 (82 aa).

It belongs to the universal ribosomal protein uS17 family. As to quaternary structure, part of the 30S ribosomal subunit.

In terms of biological role, one of the primary rRNA binding proteins, it binds specifically to the 5'-end of 16S ribosomal RNA. This is Small ribosomal subunit protein uS17 from Shewanella piezotolerans (strain WP3 / JCM 13877).